A 265-amino-acid polypeptide reads, in one-letter code: Protein N-terminal and lysine N-methyltransferase EFM7 (265 aa).

Residues W55, G81–A83, D103, W141, and A169 contribute to the S-adenosyl-L-methionine site.

The protein belongs to the class I-like SAM-binding methyltransferase superfamily. EFM7 family.

It is found in the cytoplasm. Functionally, S-adenosyl-L-methionine-dependent protein methyltransferase that trimethylates the N-terminal glycine 'Gly-2' of elongation factor 1-alpha, before also catalyzing the mono- and dimethylation of 'Lys-3'. This is Protein N-terminal and lysine N-methyltransferase EFM7 from Gibberella zeae (strain ATCC MYA-4620 / CBS 123657 / FGSC 9075 / NRRL 31084 / PH-1) (Wheat head blight fungus).